A 950-amino-acid polypeptide reads, in one-letter code: MORC family CW-type zinc finger protein 1 (950 aa).

Residues K281–Q342 are a coiled coil. The segment at S465–S530 adopts a CW-type zinc-finger fold. The Zn(2+) site is built by C485, C488, C511, and C522. Disordered regions lie at residues P532 to Q551 and K679 to R700. Over residues P541–L550 the composition is skewed to basic and acidic residues. The stretch at L885 to G916 forms a coiled coil.

As to expression, expressed at very low level in male germ cells.

The protein resides in the nucleus. In terms of biological role, required for spermatogenesis. Essential for de novo DNA methylation and silencing of transposable elements in the male embryonic germ cells. Not required for piRNA biosynthesis. This Mus musculus (Mouse) protein is MORC family CW-type zinc finger protein 1.